A 204-amino-acid chain; its full sequence is Holliday junction branch migration complex subunit RuvA (204 aa).

The domain I stretch occupies residues 1-64; sequence MIGKLKGTID…EDQLKLFGFM (64 aa). Residues 65–143 form a domain II region; it reads TALEREWFNL…AFAGEAINIA (79 aa). Positions 144-151 are flexible linker; it reads LKQELGEG. A domain III region spans residues 152–204; it reads VAAAPVADAVSALTNLGYSRDQAANAVAAAMKTAGDGADSAKLIRLGLKELAR.

The protein belongs to the RuvA family. As to quaternary structure, homotetramer. Forms an RuvA(8)-RuvB(12)-Holliday junction (HJ) complex. HJ DNA is sandwiched between 2 RuvA tetramers; dsDNA enters through RuvA and exits via RuvB. An RuvB hexamer assembles on each DNA strand where it exits the tetramer. Each RuvB hexamer is contacted by two RuvA subunits (via domain III) on 2 adjacent RuvB subunits; this complex drives branch migration. In the full resolvosome a probable DNA-RuvA(4)-RuvB(12)-RuvC(2) complex forms which resolves the HJ.

It localises to the cytoplasm. In terms of biological role, the RuvA-RuvB-RuvC complex processes Holliday junction (HJ) DNA during genetic recombination and DNA repair, while the RuvA-RuvB complex plays an important role in the rescue of blocked DNA replication forks via replication fork reversal (RFR). RuvA specifically binds to HJ cruciform DNA, conferring on it an open structure. The RuvB hexamer acts as an ATP-dependent pump, pulling dsDNA into and through the RuvAB complex. HJ branch migration allows RuvC to scan DNA until it finds its consensus sequence, where it cleaves and resolves the cruciform DNA. The polypeptide is Holliday junction branch migration complex subunit RuvA (Rhizobium etli (strain CIAT 652)).